The following is a 101-amino-acid chain: Enhancer of yellow 2 transcription factor (101 aa).

The protein belongs to the ENY2 family. As to quaternary structure, component of the nuclear pore complex (NPC)-associated AMEX complex (anchoring and mRNA export complex), composed of at least e(y)2 and xmas-2. Component of the SAGA transcription coactivator-HAT complexes, at least composed of Ada2b, e(y)2, Pcaf/Gcn5, Taf10 and Nipped-A/Trrap. Within the SAGA complex, e(y)2, Sgf11, and not/nonstop form an additional subcomplex of SAGA called the DUB module (deubiquitination module). Component of the THO complex, composed of at least e(y)2, HPR1, THO2, THOC5, THOC6 and THOC7. Interacts with e(y)1. Interacts with su(Hw) (via zinc fingers). Interacts with xmas-2; required for localization to the nuclear periphery. Interacts with the nuclear pore complex (NPC).

Its subcellular location is the nucleus. The protein resides in the nucleoplasm. It is found in the cytoplasm. Involved in mRNA export coupled transcription activation by association with both the AMEX and the SAGA complexes. The SAGA complex is a multiprotein complex that activates transcription by remodeling chromatin and mediating histone acetylation and deubiquitination. Within the SAGA complex, participates in a subcomplex that specifically deubiquitinates histone H2B. The SAGA complex is recruited to specific gene promoters by activators, where it is required for transcription. Required for nuclear receptor-mediated transactivation. Involved in transcription elongation by recruiting the THO complex onto nascent mRNA. The AMEX complex functions in docking export-competent ribonucleoprotein particles (mRNPs) to the nuclear entrance of the nuclear pore complex (nuclear basket). AMEX participates in mRNA export and accurate chromatin positioning in the nucleus by tethering genes to the nuclear periphery. The chain is Enhancer of yellow 2 transcription factor from Drosophila simulans (Fruit fly).